The chain runs to 367 residues: Zorya protein ZorE (367 aa).

Component of antiviral defense system Zorya type II, composed of ZorA, ZorB and ZorE. Expression of Zorya type II in E.coli (strain MG1655) confers resistance to phages SECphi7 and T7. While most T7 infected Zorya-containing cells undergo abortive infection, a minority produce viable phage progeny. These eventually accumulate to a high multiplicity of infection, leading to culture collapse by 170 minutes after initial infection. ZorA and ZorB probably assemble in the cell inner membrane and exert their effect there. This may be a nuclease. The polypeptide is Zorya protein ZorE (Escherichia coli (strain ATCC 8739 / DSM 1576 / NBRC 3972 / NCIMB 8545 / WDCM 00012 / Crooks)).